Here is a 546-residue protein sequence, read N- to C-terminus: Flavin-dependent oxygenase ucdF (546 aa).

Residues 81–263 (QGRIPYYAVM…VNTTIRTFPD (183 aa)) form the FAD-binding PCMH-type domain.

Belongs to the oxygen-dependent FAD-linked oxidoreductase family.

Functionally, nonribosomal peptide synthetase that mediates the biosynthesis of usterphenyllins and uscandidusins, p-terphenyl derivatives. The function of ucdF within the pathway still remains to be determined. UcdE further prenylates position C-14 of ring C of usterphenyllin B to form usterphenyllin A. The pathway begin with the biosynthesis of 4-hydroxyphenylpyruvate (HPPA) from L-tyrosine, possibly by the aminotransferase ucdG. The nonribosomal peptide synthetase ucdA then condenses two HPPA units to produce atromentin. The key step in this pathway is the reduction and dehydration of atromentin to form a terphenyl triol intermediate, performed by the NAD-dependent dehydrogenase ucdB. Further O-methylation by the methyltransferase ucdC forms terphenyllin carrying two methoxy moieties at C-9 and C-12, and subsequent dihydroxylation at C-3 of ring A and C-15 of ring C by the flavin-dependent oxygenase ucdD leads to 3,15-dihydroxyterphenyllin. Prenylation by ucdE at position C-5 of ring A forms usterphenyllin B, and is followed by a second prenylation at position C-14 of ring C to form usterphenyllin A. The following furan ring formation that leads to uscandidusins A and B was proven to be an unexpected spontaneous non-enzymatic reaction. In Aspergillus ustus, this protein is Flavin-dependent oxygenase ucdF.